Here is an 85-residue protein sequence, read N- to C-terminus: U1-ctenitoxin-Pn1a (85 aa).

The N-terminal stretch at 1-16 (MKVAIVFLSLLVLAFA) is a signal peptide. A propeptide spanning residues 17 to 34 (SESIEENREEFPVEESAR) is cleaved from the precursor. 5 disulfides stabilise this stretch: Cys35–Cys49, Cys42–Cys55, Cys46–Cys81, Cys48–Cys65, and Cys57–Cys63. The propeptide occupies 82–85 (QNKI).

The protein belongs to the neurotoxin 03 (Tx2) family. 05 subfamily. In terms of tissue distribution, expressed by the venom gland.

It localises to the secreted. Insecticidal neurotoxin that reversibly inhibits the N-methyl-D-aspartate (NMDA)-subtype of ionotropic glutamate receptor (GRIN) and inhibits inactivation of insect sodium channels (Nav). In vivo, is highly toxic to insects. This Phoneutria nigriventer (Brazilian armed spider) protein is U1-ctenitoxin-Pn1a.